Here is a 277-residue protein sequence, read N- to C-terminus: MSSFACWSLSLLILFYSPGSGEKAFEVYIWSEKQIVEATESWKINCSTNCAAPDMGGLETPTNKIMLEEHPQGKWKQFLVSNVSKDTVFFCHFTCSGKQHSESLNIRVYQPPAQVTLKLQPPRVFVGEDFTIECTVSPVQPLERLTLSLLRGRETLKNQTFGGAETVPQEATATFNSTALKKDGLNFSCQAELDLRPHGGYIIRSISEYQILEVYEPMQDNQMVIIIVVVSILLFLFVTSVLLCFIFGQHWHRRRTGTYGVLAAWRRLPRAFRARPV.

A signal peptide spans 1-22 (MSSFACWSLSLLILFYSPGSGE). At 23–222 (KAFEVYIWSE…EVYEPMQDNQ (200 aa)) the chain is on the extracellular side. Ig-like C2-type domains follow at residues 39 to 98 (TESW…CSGK) and 127 to 196 (GEDF…LDLR). 5 N-linked (GlcNAc...) asparagine glycosylation sites follow: Asn45, Asn82, Asn158, Asn176, and Asn186. Disulfide bonds link Cys46–Cys91, Cys50–Cys95, and Cys134–Cys189. Residues 223–247 (MVIIIVVVSILLFLFVTSVLLCFIF) traverse the membrane as a helical segment. The Cytoplasmic portion of the chain corresponds to 248 to 277 (GQHWHRRRTGTYGVLAAWRRLPRAFRARPV). The segment at 250–277 (HWHRRRTGTYGVLAAWRRLPRAFRARPV) is required for interaction with EZR, MSN and RDX and co-localization to microvilli.

It belongs to the immunoglobulin superfamily. ICAM family. In terms of assembly, interacts with RDX, EZR and MSN. As to expression, expressed in endothelial cells and leukocytes. High levels found in lung.

The protein resides in the membrane. It localises to the cell projection. The protein localises to the microvillus. Its function is as follows. ICAM proteins are ligands for the leukocyte adhesion protein LFA-1 (integrin alpha-L/beta-2). ICAM2 may play a role in lymphocyte recirculation by blocking LFA-1-dependent cell adhesion. It mediates adhesive interactions important for antigen-specific immune response, NK-cell mediated clearance, lymphocyte recirculation, and other cellular interactions important for immune response and surveillance. In Mus musculus (Mouse), this protein is Intercellular adhesion molecule 2 (Icam2).